A 506-amino-acid chain; its full sequence is Cytochrome P450 71B8 (506 aa).

Residues 5 to 25 (ILLCFFFLFPLLLTLFKKLLP) form a helical membrane-spanning segment. C443 is a heme binding site.

Belongs to the cytochrome P450 family. It depends on heme as a cofactor.

It is found in the membrane. The polypeptide is Cytochrome P450 71B8 (CYP71B8) (Arabidopsis thaliana (Mouse-ear cress)).